The sequence spans 183 residues: UPF0340 protein LCA_1354 (183 aa).

The protein belongs to the UPF0340 family.

The polypeptide is UPF0340 protein LCA_1354 (Latilactobacillus sakei subsp. sakei (strain 23K) (Lactobacillus sakei subsp. sakei)).